The sequence spans 161 residues: Nucleotide-binding protein SAR11_0692 (161 aa).

Belongs to the YajQ family.

In terms of biological role, nucleotide-binding protein. This is Nucleotide-binding protein SAR11_0692 from Pelagibacter ubique (strain HTCC1062).